The sequence spans 446 residues: Maltoporin (446 aa).

An N-terminal signal peptide occupies residues 1–25 (MMITLRKLPLAVAVAAGVMSAQAMA).

It belongs to the porin LamB (TC 1.B.3) family. Homotrimer formed of three 18-stranded antiparallel beta-barrels, containing three independent channels.

It is found in the cell outer membrane. It catalyses the reaction beta-maltose(in) = beta-maltose(out). Its function is as follows. Involved in the transport of maltose and maltodextrins. The polypeptide is Maltoporin (Escherichia coli (strain K12 / MC4100 / BW2952)).